The chain runs to 816 residues: Phosphatidylinositol 4-kinase beta (816 aa).

Disordered stretches follow at residues 1–30 (MGDM…GSLL), 101–120 (EDEM…RRRR), and 250–318 (RKRE…SFSS). Glycine 2 carries the post-translational modification N-acetylglycine. Positions 2 to 68 (GDMVVEPATL…VKLLHGGVAI (67 aa)) are interaction with ACBD3. Residues 10-30 (TLKPTSEPTPSPSGNNGGSLL) are compositionally biased toward low complexity. The 191-residue stretch at 52-242 (CQEVLEKVKL…GTKLRKLILS (191 aa)) folds into the PIK helical domain. Serine 258 is subject to Phosphoserine. Threonine 263 is subject to Phosphothreonine. A phosphoserine mark is found at serine 266, serine 275, serine 277, serine 284, and serine 294. Polar residues-rich tracts occupy residues 278 to 297 (DATA…SNPK) and 306 to 318 (SSST…SFSS). Serine 428 is modified (phosphoserine). The residue at position 438 (threonine 438) is a Phosphothreonine. A Phosphoserine modification is found at serine 511. Phosphothreonine is present on residues threonine 517 and threonine 519. A PI3K/PI4K catalytic domain is found at 535 to 801 (EPWQEKVRRI…MVDGSMRSIT (267 aa)). Positions 541 to 547 (VRRIREG) are G-loop. Residues 668–676 (QVKDRHNGN) form a catalytic loop region. The interval 687–711 (HIDFGFILSSSPRNLGFETSAFKLT) is activation loop.

The protein belongs to the PI3/PI4-kinase family. Type III PI4K subfamily. Interacts with ARF1 and ARF3 in the Golgi complex, but not with ARF4, ARF5 or ARF6. Interacts with NCS1/FREQ in a calcium-independent manner. Interacts with CALN1/CABP8 and CALN2/CABP7; in a calcium-dependent manner; this interaction competes with NCS1/FREQ binding. Interacts with ACBD3. Interacts with ARMH3, YWHAB, YWHAE, YWHAG, YWHAH, YWHAQ, YWHAZ and SFN. Interacts with GGA2 (via VHS domain); the interaction is important for PI4KB location at the Golgi apparatus membrane. Interacts with ATG9A. Mg(2+) is required as a cofactor. Mn(2+) serves as cofactor.

It is found in the endomembrane system. It localises to the mitochondrion outer membrane. The protein resides in the rough endoplasmic reticulum membrane. Its subcellular location is the golgi apparatus. The protein localises to the golgi apparatus membrane. It carries out the reaction a 1,2-diacyl-sn-glycero-3-phospho-(1D-myo-inositol) + ATP = a 1,2-diacyl-sn-glycero-3-phospho-(1D-myo-inositol 4-phosphate) + ADP + H(+). Its activity is regulated as follows. Inhibited by wortmannin. Increased kinase activity upon interaction with NCS1/FREQ. Functionally, phosphorylates phosphatidylinositol (PI) in the first committed step in the production of the second messenger inositol-1,4,5,-trisphosphate (PIP). May regulate Golgi disintegration/reorganization during mitosis, possibly via its phosphorylation. Involved in Golgi-to-plasma membrane trafficking. May play an important role in the inner ear development. This chain is Phosphatidylinositol 4-kinase beta (Pi4kb), found in Mus musculus (Mouse).